A 334-amino-acid polypeptide reads, in one-letter code: Zinc-finger homeodomain protein 10 (334 aa).

Over residues 1-15 (MMDMTPTITTTTTPT) the composition is skewed to low complexity. 2 disordered regions span residues 1–33 (MMDM…QPAK) and 103–164 (FHRR…LLSL). A ZF-HD dimerization-type; degenerate zinc finger spans residues 56–107 (YKECLKNHAAALGGHALDGCGEFMPSPSSISSDPTSLKCAACGCHRNFHRRD). The span at 136–155 (PPPPPPPPPRSPNSASPPPI) shows a compositional bias: pro residues. The segment at residues 200–263 (RKRFRTKFSQ…NNKNTFNRRD (64 aa)) is a DNA-binding region (homeobox). Positions 292-334 (NGHHGVGGGGELHQSVSSGGGGGGFDSDSGGANGGNVNGSSSS) are disordered. Residues 309–328 (SGGGGGGFDSDSGGANGGNV) show a composition bias toward gly residues.

As to quaternary structure, homo- and heterodimer with other ZFHD proteins. Interacts with MIF1, MIF2 and MIF3; these interactions prevent nuclear localization and DNA-binding to inhibit transcription regulation activity. Binds to ZHD1, ZHD2, ZHD4, ZHD5, ZHD6, ZHD7 and ZHD8. Interacts with KIN10 and KIN11. In terms of tissue distribution, mostly expressed in rosettes (e.g. young leaves), flowers (e.g. styles), siliques and inflorescence.

Its subcellular location is the nucleus. In terms of biological role, putative transcription factor. Probably involved in establishing polarity during leaf development through the gibberellic acid (GA) signaling pathway. This chain is Zinc-finger homeodomain protein 10 (ZHD10), found in Arabidopsis thaliana (Mouse-ear cress).